We begin with the raw amino-acid sequence, 187 residues long: Crossover junction endodeoxyribonuclease RuvC (187 aa).

Residues Asp-7, Glu-67, and Asp-140 contribute to the active site. 3 residues coordinate Mg(2+): Asp-7, Glu-67, and Asp-140.

It belongs to the RuvC family. In terms of assembly, homodimer which binds Holliday junction (HJ) DNA. The HJ becomes 2-fold symmetrical on binding to RuvC with unstacked arms; it has a different conformation from HJ DNA in complex with RuvA. In the full resolvosome a probable DNA-RuvA(4)-RuvB(12)-RuvC(2) complex forms which resolves the HJ. Mg(2+) serves as cofactor.

The protein localises to the cytoplasm. The enzyme catalyses Endonucleolytic cleavage at a junction such as a reciprocal single-stranded crossover between two homologous DNA duplexes (Holliday junction).. In terms of biological role, the RuvA-RuvB-RuvC complex processes Holliday junction (HJ) DNA during genetic recombination and DNA repair. Endonuclease that resolves HJ intermediates. Cleaves cruciform DNA by making single-stranded nicks across the HJ at symmetrical positions within the homologous arms, yielding a 5'-phosphate and a 3'-hydroxyl group; requires a central core of homology in the junction. The consensus cleavage sequence is 5'-(A/T)TT(C/G)-3'. Cleavage occurs on the 3'-side of the TT dinucleotide at the point of strand exchange. HJ branch migration catalyzed by RuvA-RuvB allows RuvC to scan DNA until it finds its consensus sequence, where it cleaves and resolves the cruciform DNA. The polypeptide is Crossover junction endodeoxyribonuclease RuvC (Chlorobaculum parvum (strain DSM 263 / NCIMB 8327) (Chlorobium vibrioforme subsp. thiosulfatophilum)).